The primary structure comprises 205 residues: High frequency lysogenization protein HflD homolog (205 aa).

This sequence belongs to the HflD family.

The protein localises to the cytoplasm. It localises to the cell inner membrane. This chain is High frequency lysogenization protein HflD homolog, found in Shewanella baltica (strain OS155 / ATCC BAA-1091).